A 946-amino-acid polypeptide reads, in one-letter code: DDB1- and CUL4-associated factor 5 (946 aa).

WD repeat units lie at residues 51 to 91 (GHFG…HSRV), 99 to 139 (EHHS…LDVF), 140 to 180 (AHED…HGEP), 185 to 225 (NYPS…SSLL), 277 to 317 (FNSC…EAGG), and 331 to 370 (GHRS…GCTG). The segment at 449-478 (GVSERSGYTDSESSASLPRSPPPTVDESAD) is disordered. The span at 454–465 (SGYTDSESSASL) shows a compositional bias: polar residues. Residue Thr500 is modified to Phosphothreonine. Disordered stretches follow at residues 527–656 (LSNE…MESV), 675–860 (SNNK…ELET), and 894–946 (CETP…KLKT). Residues Ser531 and Ser533 each carry the phosphoserine modification. The span at 531 to 544 (SDSEENVCEAELDT) shows a compositional bias: acidic residues. Positions 555–567 (PEDGSSSPSSSTS) are enriched in low complexity. The span at 579–592 (ATTRQRNAMRRRQK) shows a compositional bias: basic residues. Positions 625–638 (LSPSPDSSPERSAS) are enriched in low complexity. Ser626, Ser628, and Ser645 each carry phosphoserine. Basic and acidic residues predominate over residues 691 to 701 (EGRAGTSHKDN). Composition is skewed to polar residues over residues 760–769 (GTSQDTNNSG) and 808–819 (TLNSASGNCPRT).

Interacts with DDB1, CUL4A or CUL4B. Interacts with L3MBTL3. Interacts with SOX2. Interacts with DNMT1. Interacts with E2F1.

It functions in the pathway protein modification; protein ubiquitination. Its function is as follows. Is a substrate receptor for the CUL4-DDB1 E3 ubiquitin-protein ligase complex (CRL4), involved in the ubiquitination of a set of methylated non-histone proteins, including SOX2. The complex CRL4-DCAF5 is also involved in the ubiquitination of methylated DNMT1 and E2F1. The protein is DDB1- and CUL4-associated factor 5 (Dcaf5) of Mus musculus (Mouse).